The primary structure comprises 472 residues: Ulvan lyase (472 aa).

A signal peptide spans 1–21 (MIIKQYLLKISLCVLLLGCDS). Substrate contacts are provided by N46 and N109. The active-site Proton donor is the H110. 2 residues coordinate substrate: K112 and H130. The active-site Proton acceptor is Y175. Substrate-binding residues include R191, H195, and Y233. H195 serves as a coordination point for Zn(2+). The Zn(2+) site is built by H251, C253, and H265. H265 contacts substrate.

The protein belongs to the polysaccharide lyase 25 family.

Its function is as follows. Ulvan lyase involved in ulvan degradation. Ulvan is the main polysaccharide component of the Ulvales (green seaweed) cell wall. It is composed of disaccharide building blocks comprising 3-sulfated rhamnose (Rha3S) linked to D-glucuronic acid (GlcA), L-iduronic acid (IduA), or D-xylose (Xyl). Ulvan lyase catalyzes the endolytic cleavage of the glycosidic bond between Rha3S and the uronic acids GlcA or IduA, producing oligosaccharides that have unsaturated 4-deoxy-L-threo-hex-4-enopyranosiduronic acid (deltaUA) at the non-reducing end. This results eventually in the degradation of the ulvan polysaccharide into deltaUA-Rha3S disaccharides and deltaUA-Rha3S-Xyl-Rha3S tetrasaccharides. The protein is Ulvan lyase of Nonlabens ulvanivorans (Persicivirga ulvanivorans).